Reading from the N-terminus, the 1098-residue chain is MGLPGVIPALVLRGQLLLSVLWLLGPQTSRGLVITPPGPEFVLNISSTFVLTCSGSAPVMWEQMSQVPWQEAAMNQDGTFSSVLTLTNVTGGDTGEYFCVYNNSLGPELSERKRIYIFVPDPTMGFLPMDSEDLFIFVTDVTETTIPCRVTDPQLEVTLHEKKVDIPLHVPYDHQRGFTGTFEDKTYICKTTIGDREVDSDTYYVYSLQVSSINVSVNAVQTVVRQGESITIRCIVMGNDVVNFQWTYPRMKSGRLVEPVTDYLFGVPSRIGSILHIPTAELSDSGTYTCNVSVSVNDHGDEKAINISVIENGYVRLLETLGDVEIAELHRSRTLRVVFEAYPMPSVLWLKDNRTLGDSGAGELVLSTRNMSETRYVSELILVRVKVSEAGYYTMRAFHEDDEVQLSFKLQVNVPVRVLELSESHPANGEQTIRCRGRGMPQPNVTWSTCRDLKRCPRKLSPTPLGNSSKEESQLETNVTFWEEDQEYEVVSTLRLRHVDQPLSVRCMLQNSMGGDSQEVTVVPHSLPFKVVVISAILALVVLTVISLIILIMLWQKKPRYEIRWKVIESVSSDGHEYIYVDPVQLPYDSTWELPRDQLVLGRTLGSGAFGQVVEATAHGLSHSQATMKVAVKMLKSTARSSEKQALMSELKIMSHLGPHLNVVNLLGACTKGGPIYIITEYCRYGDLVDYLHRNKHTFLQRHSNKHCPPSAELYSNALPVGFSLPSHLNLTGESDGGYMDMSKDESIDYVPMLDMKGDIKYADIESPSYMAPYDNYVPSAPERTYRATLINDSPVLSYTDLVGFSYQVANGMDFLASKNCVHRDLAARNVLICEGKLVKICDFGLARDIMRDSNYISKGSTFLPLKWMAPESIFNSLYTTLSDVWSFGILLWEIFTLGGTPYPELPMNDQFYNAIKRGYRMAQPAHASDEIYEIMQKCWEEKFETRPPFSQLVLLLERLLGEGYKKKYQQVDEEFLRSDHPAILRSQARFPGIHSLRSPLDTSSVLYTAVQPNESDNDYIIPLPDPKPDVADEGLPEGSPSLASSTLNEVNTSSTISCDSPLELQEEPQQAEPEAQLEQPQDSGCPGPLAEAEDSFL.

An N-terminal signal peptide occupies residues 1 to 31; that stretch reads MGLPGVIPALVLRGQLLLSVLWLLGPQTSRG. At 32–531 the chain is on the extracellular side; that stretch reads LVITPPGPEF…VVPHSLPFKV (500 aa). 5 Ig-like C2-type domains span residues 33-119, 128-209, 213-308, 330-402, and 415-523; these read VITP…YIFV, PMDS…YSLQ, INVS…INIS, HRSR…HEDD, and PVRV…VTVV. N-linked (GlcNAc...) asparagine glycosylation is found at N44, N88, and N102. A disulfide bond links C53 and C99. C148 and C189 form a disulfide bridge. N-linked (GlcNAc...) asparagine glycosylation is present at N214. A disulfide bond links C234 and C290. Residues N291, N306, N353, N370, N444, N467, and N478 are each glycosylated (N-linked (GlcNAc...) asparagine). C435 and C507 are oxidised to a cystine. A helical membrane pass occupies residues 532–552; that stretch reads VVISAILALVVLTVISLIILI. At 553–1098 the chain is on the cytoplasmic side; the sequence is MLWQKKPRYE…PLAEAEDSFL (546 aa). Phosphotyrosine; by autocatalysis occurs at positions 561, 578, and 580. A Protein kinase domain is found at 599-961; it reads LVLGRTLGSG…QLVLLLERLL (363 aa). ATP-binding positions include 605 to 613 and K633; that span reads LGSGAFGQV. The residue at position 685 (Y685) is a Phosphotyrosine; by ABL1 and ABL2. Phosphotyrosine; by autocatalysis occurs at positions 715, 739, 750, 762, 770, 774, and 777. Catalysis depends on D825, which acts as the Proton acceptor. Y856 carries the phosphotyrosine; by autocatalysis modification. Phosphotyrosine; by ABL1 and ABL2 occurs at positions 933 and 969. 2 positions are modified to phosphotyrosine; by autocatalysis: Y1008 and Y1020. The segment at 1016-1098 is disordered; the sequence is SDNDYIIPLP…PLAEAEDSFL (83 aa). Polar residues predominate over residues 1042-1059; it reads SLASSTLNEVNTSSTISC. Positions 1062 to 1082 are enriched in low complexity; sequence PLELQEEPQQAEPEAQLEQPQ.

Belongs to the protein kinase superfamily. Tyr protein kinase family. CSF-1/PDGF receptor subfamily. As to quaternary structure, interacts with homodimeric PDGFB and PDGFD, and with heterodimers formed by PDGFA and PDGFB. May also interact with homodimeric PDGFC. Monomer in the absence of bound ligand. Interaction with homodimeric PDGFB, heterodimers formed by PDGFA and PDGFB or homodimeric PDGFD, leads to receptor dimerization, where both PDGFRA homodimers and heterodimers with PDGFRB are observed. Interacts with SH2B2/APS. Interacts directly (tyrosine phosphorylated) with SHB. Interacts (tyrosine phosphorylated) with PIK3R1 and RASA1. Interacts (tyrosine phosphorylated) with CBL. Interacts (tyrosine phosphorylated) with SRC and SRC family kinases. Interacts (tyrosine phosphorylated) with PIK3C2B, maybe indirectly. Interacts (tyrosine phosphorylated) with SHC1, GRB7, GRB10 and NCK1. Interaction with GRB2 is mediated by SHC1. Interacts (via C-terminus) with NHERF1. In terms of processing, autophosphorylated on tyrosine residues upon ligand binding. Autophosphorylation occurs in trans, i.e. one subunit of the dimeric receptor phosphorylates tyrosine residues on the other subunit. Phosphorylation at Tyr-578, and to a lesser degree, Tyr-580 is important for interaction with SRC. Phosphorylation at Tyr-715 is important for interaction with GRB2. Phosphorylation at Tyr-739 and Tyr-750 is important for interaction with PIK3R1. Phosphorylation at Tyr-750 is important for interaction with NCK1. Phosphorylation at Tyr-770 and Tyr-856 is important for interaction with RASA1/GAP. Phosphorylation at Tyr-856 is important for efficient phosphorylation of PLCG1 and PTPN11, resulting in increased phosphorylation of AKT1, MAPK1/ERK2 and/or MAPK3/ERK1, PDCD6IP/ALIX and STAM, and in increased cell proliferation. Phosphorylation at Tyr-1008 is important for interaction with PTPN11. Phosphorylation at Tyr-1008 and Tyr-1020 is important for interaction with PLCG1. Dephosphorylated by PTPRJ at Tyr-750, Tyr-856, Tyr-1008 and Tyr-1020. Dephosphorylated by PTPN2 at Tyr-578 and Tyr-1020. N-glycosylated. Post-translationally, ubiquitinated. After autophosphorylation, the receptor is polyubiquitinated, leading to its degradation. Weakly expressed in glomerular mesangial cells and interstitial cells. Up-regulated in areas of renal fibrosis. In mice with unilateral ureteral obstruction, increased expression in interstitial cells at day 4 and expression is markedly elevated at day 7 and is maximal at day 14.

The protein localises to the cell membrane. Its subcellular location is the cytoplasmic vesicle. The protein resides in the lysosome lumen. It catalyses the reaction L-tyrosyl-[protein] + ATP = O-phospho-L-tyrosyl-[protein] + ADP + H(+). Its activity is regulated as follows. Present in an inactive conformation in the absence of bound ligand. Binding of PDGFB and/or PDGFD leads to dimerization and activation by autophosphorylation on tyrosine residues. Its function is as follows. Tyrosine-protein kinase that acts as a cell-surface receptor for homodimeric PDGFB and PDGFD and for heterodimers formed by PDGFA and PDGFB, and plays an essential role in the regulation of embryonic development, cell proliferation, survival, differentiation, chemotaxis and migration. Plays an essential role in blood vessel development by promoting proliferation, migration and recruitment of pericytes and smooth muscle cells to endothelial cells. Plays a role in the migration of vascular smooth muscle cells and the formation of neointima at vascular injury sites. Required for normal development of the cardiovascular system. Required for normal recruitment of pericytes (mesangial cells) in the kidney glomerulus, and for normal formation of a branched network of capillaries in kidney glomeruli. Promotes rearrangement of the actin cytoskeleton and the formation of membrane ruffles. Binding of its cognate ligands - homodimeric PDGFB, heterodimers formed by PDGFA and PDGFB or homodimeric PDGFD -leads to the activation of several signaling cascades; the response depends on the nature of the bound ligand and is modulated by the formation of heterodimers between PDGFRA and PDGFRB. Phosphorylates PLCG1, PIK3R1, PTPN11, RASA1/GAP, CBL, SHC1 and NCK1. Activation of PLCG1 leads to the production of the cellular signaling molecules diacylglycerol and inositol 1,4,5-trisphosphate, mobilization of cytosolic Ca(2+) and the activation of protein kinase C. Phosphorylation of PIK3R1, the regulatory subunit of phosphatidylinositol 3-kinase, leads to the activation of the AKT1 signaling pathway. Phosphorylation of SHC1, or of the C-terminus of PTPN11, creates a binding site for GRB2, resulting in the activation of HRAS, RAF1 and down-stream MAP kinases, including MAPK1/ERK2 and/or MAPK3/ERK1. Promotes phosphorylation and activation of SRC family kinases. Promotes phosphorylation of PDCD6IP/ALIX and STAM. Receptor signaling is down-regulated by protein phosphatases that dephosphorylate the receptor and its down-stream effectors, and by rapid internalization of the activated receptor. This Mus musculus (Mouse) protein is Platelet-derived growth factor receptor beta (Pdgfrb).